We begin with the raw amino-acid sequence, 248 residues long: Type II restriction enzyme XhoI (248 aa).

It belongs to the XhoI type II restriction endonuclease family.

It catalyses the reaction Endonucleolytic cleavage of DNA to give specific double-stranded fragments with terminal 5'-phosphates.. A P subtype restriction enzyme that recognizes the double-stranded sequence 5'-CTCGAG-3' and cleaves after C-1. This Xanthomonas vasicola protein is Type II restriction enzyme XhoI.